The following is a 301-amino-acid chain: Glycine--tRNA ligase alpha subunit (301 aa).

This sequence belongs to the class-II aminoacyl-tRNA synthetase family. As to quaternary structure, tetramer of two alpha and two beta subunits.

It is found in the cytoplasm. It catalyses the reaction tRNA(Gly) + glycine + ATP = glycyl-tRNA(Gly) + AMP + diphosphate. The polypeptide is Glycine--tRNA ligase alpha subunit (Shewanella amazonensis (strain ATCC BAA-1098 / SB2B)).